We begin with the raw amino-acid sequence, 105 residues long: Large ribosomal subunit protein uL24 (105 aa).

This sequence belongs to the universal ribosomal protein uL24 family. Part of the 50S ribosomal subunit.

Its function is as follows. One of two assembly initiator proteins, it binds directly to the 5'-end of the 23S rRNA, where it nucleates assembly of the 50S subunit. One of the proteins that surrounds the polypeptide exit tunnel on the outside of the subunit. The chain is Large ribosomal subunit protein uL24 from Cellvibrio japonicus (strain Ueda107) (Pseudomonas fluorescens subsp. cellulosa).